The following is a 462-amino-acid chain: Probable peptidoglycan glycosyltransferase FtsW (462 aa).

Residues 1 to 63 are Cytoplasmic-facing; sequence MGCIVCSDGI…VRDGRKFDAP (63 aa). The helical transmembrane segment at 64–84 threads the bilayer; the sequence is LLWMVVLMTAFGLLMIYSASV. Over 85–97 the chain is Periplasmic; that stretch reads YLASKEGGDQFFY. The chain crosses the membrane as a helical span at residues 98 to 118; sequence LTRQAGFVVAGLIASGFLWFL. The Cytoplasmic segment spans residues 119–125; it reads CRMRTWR. Residues 126–146 form a helical membrane-spanning segment; sequence RLVPWIFALSGLLLVAVLIAG. The Periplasmic portion of the chain corresponds to 147–160; the sequence is REINGATRWIPLGP. The chain crosses the membrane as a helical span at residues 161–181; sequence LNFQPTELFKLAVILYLASLF. Topologically, residues 182-227 are cytoplasmic; the sequence is TRREEVLRSMESLGWQSIWRGTANLIMSATNPQARRETLEMYGRFR. 2 helical membrane passes run 228–248 and 249–269; these read AIIL…VQPD and FGSF…AGLP. The Cytoplasmic segment spans residues 270–271; that stretch reads WK. Residues 272-292 form a helical membrane-spanning segment; it reads YFFVLVGSVLGGMVLMITAAP. Residues 293–348 lie on the Periplasmic side of the membrane; the sequence is YRVQRVVAFLDPWKDPQGAGYQLTHSLMAIGRGEWFGMGLGASLSKRGFLPEAHTD. The chain crosses the membrane as a helical span at residues 349 to 369; sequence FIFAIIAEEFGFFGMCVLIFC. Residues 370–386 are Cytoplasmic-facing; it reads YGWLVVRAFSIGKQSRD. Residues 387-409 form a helical membrane-spanning segment; sequence LGLTFNAYIASGIGIWIGIQSFF. At 410–424 the chain is on the periplasmic side; that stretch reads NIGVNIGALPTKGLT. The helical transmembrane segment at 425 to 445 threads the bilayer; the sequence is LPLMSYGGSSVFFMLISMMLL. The Cytoplasmic segment spans residues 446–462; that stretch reads LRIDYENRRKMRGYRVE.

It belongs to the SEDS family. FtsW subfamily.

It is found in the cell inner membrane. It catalyses the reaction [GlcNAc-(1-&gt;4)-Mur2Ac(oyl-L-Ala-gamma-D-Glu-L-Lys-D-Ala-D-Ala)](n)-di-trans,octa-cis-undecaprenyl diphosphate + beta-D-GlcNAc-(1-&gt;4)-Mur2Ac(oyl-L-Ala-gamma-D-Glu-L-Lys-D-Ala-D-Ala)-di-trans,octa-cis-undecaprenyl diphosphate = [GlcNAc-(1-&gt;4)-Mur2Ac(oyl-L-Ala-gamma-D-Glu-L-Lys-D-Ala-D-Ala)](n+1)-di-trans,octa-cis-undecaprenyl diphosphate + di-trans,octa-cis-undecaprenyl diphosphate + H(+). Its pathway is cell wall biogenesis; peptidoglycan biosynthesis. Peptidoglycan polymerase that is essential for cell division. This chain is Probable peptidoglycan glycosyltransferase FtsW, found in Neisseria gonorrhoeae (strain NCCP11945).